Consider the following 40-residue polypeptide: Submaxillary gland androgen-regulated protein 2, isoform epsilon (40 aa).

A signal peptide spans 1-20 (MKALYMVFVLWVLIGCFLRC).

The protein localises to the secreted. Its function is as follows. May play a role in protection or detoxification. The polypeptide is Submaxillary gland androgen-regulated protein 2, isoform epsilon (Smr2) (Mus musculus (Mouse)).